A 742-amino-acid polypeptide reads, in one-letter code: Phosphoribosylformylglycinamidine synthase subunit PurL (742 aa).

The active site involves H53. Residues Y56 and K95 each coordinate ATP. E97 provides a ligand contact to Mg(2+). Substrate contacts are provided by residues 98–101 (SHNH) and R120. H99 functions as the Proton acceptor in the catalytic mechanism. D121 is a binding site for Mg(2+). Q245 is a binding site for substrate. D275 is a binding site for Mg(2+). Position 319–321 (319–321 (ESQ)) interacts with substrate. D502 and G539 together coordinate ATP. Residue N540 coordinates Mg(2+). A substrate-binding site is contributed by S542.

It belongs to the FGAMS family. As to quaternary structure, monomer. Part of the FGAM synthase complex composed of 1 PurL, 1 PurQ and 2 PurS subunits.

The protein localises to the cytoplasm. The enzyme catalyses N(2)-formyl-N(1)-(5-phospho-beta-D-ribosyl)glycinamide + L-glutamine + ATP + H2O = 2-formamido-N(1)-(5-O-phospho-beta-D-ribosyl)acetamidine + L-glutamate + ADP + phosphate + H(+). It participates in purine metabolism; IMP biosynthesis via de novo pathway; 5-amino-1-(5-phospho-D-ribosyl)imidazole from N(2)-formyl-N(1)-(5-phospho-D-ribosyl)glycinamide: step 1/2. Its function is as follows. Part of the phosphoribosylformylglycinamidine synthase complex involved in the purines biosynthetic pathway. Catalyzes the ATP-dependent conversion of formylglycinamide ribonucleotide (FGAR) and glutamine to yield formylglycinamidine ribonucleotide (FGAM) and glutamate. The FGAM synthase complex is composed of three subunits. PurQ produces an ammonia molecule by converting glutamine to glutamate. PurL transfers the ammonia molecule to FGAR to form FGAM in an ATP-dependent manner. PurS interacts with PurQ and PurL and is thought to assist in the transfer of the ammonia molecule from PurQ to PurL. This Lactobacillus acidophilus (strain ATCC 700396 / NCK56 / N2 / NCFM) protein is Phosphoribosylformylglycinamidine synthase subunit PurL.